The following is a 355-amino-acid chain: Peptide chain release factor 1 (355 aa).

Gln231 carries the post-translational modification N5-methylglutamine. The segment at 283 to 303 is disordered; the sequence is LAKESEARKSQVGSGDRSERI.

The protein belongs to the prokaryotic/mitochondrial release factor family. In terms of processing, methylated by PrmC. Methylation increases the termination efficiency of RF1.

Its subcellular location is the cytoplasm. In terms of biological role, peptide chain release factor 1 directs the termination of translation in response to the peptide chain termination codons UAG and UAA. The polypeptide is Peptide chain release factor 1 (Campylobacter lari (strain RM2100 / D67 / ATCC BAA-1060)).